A 328-amino-acid polypeptide reads, in one-letter code: Tetraacyldisaccharide 4'-kinase (328 aa).

55 to 62 lines the ATP pocket; sequence TAGGNGKT.

The protein belongs to the LpxK family.

The enzyme catalyses a lipid A disaccharide + ATP = a lipid IVA + ADP + H(+). The protein operates within glycolipid biosynthesis; lipid IV(A) biosynthesis; lipid IV(A) from (3R)-3-hydroxytetradecanoyl-[acyl-carrier-protein] and UDP-N-acetyl-alpha-D-glucosamine: step 6/6. In terms of biological role, transfers the gamma-phosphate of ATP to the 4'-position of a tetraacyldisaccharide 1-phosphate intermediate (termed DS-1-P) to form tetraacyldisaccharide 1,4'-bis-phosphate (lipid IVA). The protein is Tetraacyldisaccharide 4'-kinase of Shigella dysenteriae serotype 1 (strain Sd197).